Consider the following 195-residue polypeptide: Probable GTP-binding protein EngB (195 aa).

In terms of domain architecture, EngB-type G spans 24–195 (DWPEIALAGR…EAWTAILKYL (172 aa)). GTP contacts are provided by residues 32–39 (GRSNVGKS), 59–63 (GKTQL), 77–80 (DVPG), 144–147 (TKAD), and 176–178 (FSS). Positions 39 and 61 each coordinate Mg(2+).

It belongs to the TRAFAC class TrmE-Era-EngA-EngB-Septin-like GTPase superfamily. EngB GTPase family. Mg(2+) serves as cofactor.

In terms of biological role, necessary for normal cell division and for the maintenance of normal septation. This Lactococcus lactis subsp. cremoris (strain MG1363) protein is Probable GTP-binding protein EngB.